Here is a 211-residue protein sequence, read N- to C-terminus: Superoxide dismutase [Cu-Zn], chloroplastic (211 aa).

Residues 1-57 (MQAILAAAMAAQTLLFSATAPPASLFQSPSSARPFHSLRLAAGPAGAAAARALVVAD) constitute a chloroplast transit peptide. Positions 103, 105, and 120 each coordinate Cu cation. A disulfide bond links C114 and C203. Residues H120, H128, H137, and D140 each coordinate Zn(2+). Residue H177 coordinates Cu cation.

The protein belongs to the Cu-Zn superoxide dismutase family. In terms of assembly, homotetramer. It depends on Cu cation as a cofactor. Zn(2+) serves as cofactor.

It is found in the plastid. It localises to the chloroplast. The enzyme catalyses 2 superoxide + 2 H(+) = H2O2 + O2. Functionally, destroys radicals which are normally produced within the cells and which are toxic to biological systems. In Oryza sativa subsp. japonica (Rice), this protein is Superoxide dismutase [Cu-Zn], chloroplastic (SODCP).